A 693-amino-acid chain; its full sequence is Protein FAM13A (693 aa).

At serine 19 the chain carries Phosphoserine. Disordered regions lie at residues serine 56–aspartate 89 and arginine 136–methionine 233. Over residues glycine 69–threonine 78 the composition is skewed to polar residues. Residues leucine 159 to glutamate 171 show a composition bias toward low complexity. The span at glutamate 184–histidine 197 shows a compositional bias: basic and acidic residues. 2 positions are modified to phosphoserine: serine 267 and serine 287. 2 disordered regions span residues aspartate 302–glutamate 331 and isoleucine 396–aspartate 424. The residue at position 397 (serine 397) is a Phosphoserine. Threonine 402 carries the phosphothreonine modification. Residues arginine 408–serine 418 are compositionally biased toward polar residues.

Belongs to the FAM13 family. Interacts with ANXA2. In terms of tissue distribution, expressed in the mammary gland, with similar levels at all stages of development, including pregnancy, lactation and involution.

Functionally, (Microbial infection) Plays a role in the clearance of Pseudomonas aeruginosa by macrophages. In complex with ANXA2, promotes activation of Rho GTPases following P.aeruginosa infection. This chain is Protein FAM13A (Fam13a), found in Mus musculus (Mouse).